The following is a 256-amino-acid chain: DNA repair protein RecO (256 aa).

This sequence belongs to the RecO family.

Functionally, involved in DNA repair and RecF pathway recombination. The chain is DNA repair protein RecO from Clostridium novyi (strain NT).